A 217-amino-acid polypeptide reads, in one-letter code: Thiamine-phosphate synthase (217 aa).

Residues 44-48 and Asn-76 contribute to the 4-amino-2-methyl-5-(diphosphooxymethyl)pyrimidine site; that span reads QYREK. Residues Asp-77 and Asp-96 each contribute to the Mg(2+) site. Position 115 (Ser-115) interacts with 4-amino-2-methyl-5-(diphosphooxymethyl)pyrimidine. 141–143 is a 2-[(2R,5Z)-2-carboxy-4-methylthiazol-5(2H)-ylidene]ethyl phosphate binding site; that stretch reads TKT. Lys-144 is a 4-amino-2-methyl-5-(diphosphooxymethyl)pyrimidine binding site. 2-[(2R,5Z)-2-carboxy-4-methylthiazol-5(2H)-ylidene]ethyl phosphate contacts are provided by residues Gly-172 and 192–193; that span reads VS.

Belongs to the thiamine-phosphate synthase family. Mg(2+) serves as cofactor.

The catalysed reaction is 2-[(2R,5Z)-2-carboxy-4-methylthiazol-5(2H)-ylidene]ethyl phosphate + 4-amino-2-methyl-5-(diphosphooxymethyl)pyrimidine + 2 H(+) = thiamine phosphate + CO2 + diphosphate. The enzyme catalyses 2-(2-carboxy-4-methylthiazol-5-yl)ethyl phosphate + 4-amino-2-methyl-5-(diphosphooxymethyl)pyrimidine + 2 H(+) = thiamine phosphate + CO2 + diphosphate. It carries out the reaction 4-methyl-5-(2-phosphooxyethyl)-thiazole + 4-amino-2-methyl-5-(diphosphooxymethyl)pyrimidine + H(+) = thiamine phosphate + diphosphate. The protein operates within cofactor biosynthesis; thiamine diphosphate biosynthesis; thiamine phosphate from 4-amino-2-methyl-5-diphosphomethylpyrimidine and 4-methyl-5-(2-phosphoethyl)-thiazole: step 1/1. In terms of biological role, condenses 4-methyl-5-(beta-hydroxyethyl)thiazole monophosphate (THZ-P) and 2-methyl-4-amino-5-hydroxymethyl pyrimidine pyrophosphate (HMP-PP) to form thiamine monophosphate (TMP). The chain is Thiamine-phosphate synthase from Lawsonia intracellularis (strain PHE/MN1-00).